Consider the following 267-residue polypeptide: B3 domain-containing protein At3g11580 (267 aa).

Positions 29–143 form a DNA-binding region, TF-B3; that stretch reads FEKSLTPSDV…RLFIGWRRRG (115 aa).

The protein resides in the nucleus. The sequence is that of B3 domain-containing protein At3g11580 (ARF32) from Arabidopsis thaliana (Mouse-ear cress).